Consider the following 219-residue polypeptide: UPF0502 protein HCH_06091 (219 aa).

Belongs to the UPF0502 family.

The protein is UPF0502 protein HCH_06091 of Hahella chejuensis (strain KCTC 2396).